The chain runs to 103 residues: Large ribosomal subunit protein uL24 (103 aa).

It belongs to the universal ribosomal protein uL24 family. As to quaternary structure, part of the 50S ribosomal subunit.

In terms of biological role, one of two assembly initiator proteins, it binds directly to the 5'-end of the 23S rRNA, where it nucleates assembly of the 50S subunit. Its function is as follows. One of the proteins that surrounds the polypeptide exit tunnel on the outside of the subunit. The chain is Large ribosomal subunit protein uL24 from Bacillus cytotoxicus (strain DSM 22905 / CIP 110041 / 391-98 / NVH 391-98).